The chain runs to 261 residues: Polycomb group RING finger protein 1 (261 aa).

The RING-type zinc finger occupies Cys45–Asn84.

As to quaternary structure, component of a PRC1-like complex.

It is found in the nucleus. Component of a Polycomb group (PcG) multiprotein PRC1-like complex, a complex class required to maintain the transcriptionally repressive state of many genes, including Hox genes, throughout development. PcG PRC1 complex acts via chromatin remodeling and modification of histones; it mediates monoubiquitination of histone H2A 'Lys-119', rendering chromatin heritably changed in its expressibility. This chain is Polycomb group RING finger protein 1 (pcgf1), found in Danio rerio (Zebrafish).